A 225-amino-acid polypeptide reads, in one-letter code: Pre-mRNA-splicing factor SPF27 (225 aa).

The stretch at serine 138–arginine 222 forms a coiled coil.

Belongs to the SPF27 family. Component of the pre-catalytic and catalytic spliceosome complexes. Component of the postcatalytic spliceosome P complex.

The protein localises to the nucleus. Functionally, required for pre-mRNA splicing as component of the activated spliceosome. May have a scaffolding role in the spliceosome assembly as it contacts all other components of the core complex. The chain is Pre-mRNA-splicing factor SPF27 (bcas2) from Danio rerio (Zebrafish).